Reading from the N-terminus, the 504-residue chain is MNIKPEEITSIIKKEIEKYEKQIKTVDSGTIIQVGDGVSRVYGLDDCMEGELLEFPNDVYGMALNLEQDNVGCVLLGNEEGIKEGDIVKGSGKIVEVPVGEALIGRVVNSLGEELDGKGPINTNQTRPIEVKAPSIIDRSSVNEPLQTGIKAIDSMIPIGKGQRELIIGDRQTGKTALVIDTILNQKGKDVICIYVAIGQKQSTVAHIVNTLTEMGAMDYSIIVSSTAADSAPLQYLAPYAGCSIGEYFMNQGKDVLIVYDDLSKHAVAYRTMSLLLRRPPGREAYPGDVFYIHSRLLERAAKLSEENGGGSLTALPIIETLAGDITAYIPTNVISITDGQIFLESDLFNSGQRPAVNAGISVSRVGGNAQIKAMKQVTGTLRLELAQYRELAAFAQFGSDLDKDSKKRLEKGKRLVEILKQDQYKPLEVEKQVIILYTAVNDFLSDIKVEDIKKFEKELLEYVDTHYRELGRQIAEEKVLTDEIKAKLEVAIVEFKKIFLQEA.

169-176 (GDRQTGKT) is a binding site for ATP.

The protein belongs to the ATPase alpha/beta chains family. F-type ATPases have 2 components, CF(1) - the catalytic core - and CF(0) - the membrane proton channel. CF(1) has five subunits: alpha(3), beta(3), gamma(1), delta(1), epsilon(1). CF(0) has three main subunits: a(1), b(2) and c(9-12). The alpha and beta chains form an alternating ring which encloses part of the gamma chain. CF(1) is attached to CF(0) by a central stalk formed by the gamma and epsilon chains, while a peripheral stalk is formed by the delta and b chains.

It localises to the cell membrane. It catalyses the reaction ATP + H2O + 4 H(+)(in) = ADP + phosphate + 5 H(+)(out). Produces ATP from ADP in the presence of a proton gradient across the membrane. The alpha chain is a regulatory subunit. The chain is ATP synthase subunit alpha from Clostridium botulinum (strain Alaska E43 / Type E3).